The chain runs to 148 residues: MLKALFICVASCLLVVNDGNIIHRCSLAKILYEEDLDGFEGYSLPDWLCLAFVESNFNISKVNENVDGSFDYGIFQINSRYWCNDYQSHSENFCHVDCQELLSPNLISTIHCAKKIVSGPGGMKNWVEWKLHCLGRPLSYWMTGCHLG.

A signal peptide spans 1 to 19; that stretch reads MLKALFICVASCLLVVNDG. Positions 20 to 148 constitute a C-type lysozyme domain; it reads NIIHRCSLAK…SYWMTGCHLG (129 aa). Disulfide bonds link Cys25/Cys145, Cys49/Cys133, Cys83/Cys98, and Cys94/Cys112. Residue Glu54 is part of the active site. Residue Asn58 is glycosylated (N-linked (GlcNAc...) asparagine). The active site involves Asp71.

This sequence belongs to the glycosyl hydrolase 22 family. In terms of assembly, monomer. As to expression, expressed strongly in testis and epididymis and weakly in seminal vesicle, vas deferens, kidney and spleen. Highly expressed in primary spermatocytes and round spermatids (at protein level).

It is found in the secreted. Its subcellular location is the cell surface. The protein localises to the cell projection. The protein resides in the cilium. It localises to the flagellum. It carries out the reaction Hydrolysis of (1-&gt;4)-beta-linkages between N-acetylmuramic acid and N-acetyl-D-glucosamine residues in a peptidoglycan and between N-acetyl-D-glucosamine residues in chitodextrins.. Functionally, may be involved sperm-egg plasma membrane adhesion and fusion during fertilization. Exhibits bacteriolytic activity in vitro against Micrococcus luteus and Staphylococcus aureus. Shows weak bacteriolytic activity against Gram-positive bacteria at physiological pH. Bacteriolytic activity is pH-dependent, with a maximum at around pH 5.6. The chain is Lysozyme-like protein 6 (Lyzl6) from Mus musculus (Mouse).